The sequence spans 545 residues: Chaperonin GroEL (545 aa).

ATP-binding positions include 30–33 (TLGP), Lys51, 87–91 (DGTTT), Gly415, and Asp495.

This sequence belongs to the chaperonin (HSP60) family. As to quaternary structure, forms a cylinder of 14 subunits composed of two heptameric rings stacked back-to-back. Interacts with the co-chaperonin GroES.

It is found in the cytoplasm. It carries out the reaction ATP + H2O + a folded polypeptide = ADP + phosphate + an unfolded polypeptide.. Functionally, together with its co-chaperonin GroES, plays an essential role in assisting protein folding. The GroEL-GroES system forms a nano-cage that allows encapsulation of the non-native substrate proteins and provides a physical environment optimized to promote and accelerate protein folding. The protein is Chaperonin GroEL of Shewanella oneidensis (strain ATCC 700550 / JCM 31522 / CIP 106686 / LMG 19005 / NCIMB 14063 / MR-1).